A 54-amino-acid polypeptide reads, in one-letter code: AYVINDSCIACGACKPECPVNIQQGSIYAIDADSCIDCGSCASVCPVGAPNPED.

2 consecutive 4Fe-4S ferredoxin-type domains span residues 2-25 and 26-54; these read YVIN…IQQG and SIYA…NPED. Positions 8, 11, 14, 18, 35, 38, 41, and 45 each coordinate [4Fe-4S] cluster.

[4Fe-4S] cluster is required as a cofactor.

Ferredoxins are iron-sulfur proteins that transfer electrons in a wide variety of metabolic reactions. The polypeptide is Ferredoxin (Peptoniphilus asaccharolyticus (Peptostreptococcus asaccharolyticus)).